The sequence spans 443 residues: Light-independent protochlorophyllide reductase subunit N (443 aa).

3 residues coordinate [4Fe-4S] cluster: cysteine 15, cysteine 40, and cysteine 99.

This sequence belongs to the BchN/ChlN family. Protochlorophyllide reductase is composed of three subunits; BchL, BchN and BchB. Forms a heterotetramer of two BchB and two BchN subunits. The cofactor is [4Fe-4S] cluster.

The enzyme catalyses chlorophyllide a + oxidized 2[4Fe-4S]-[ferredoxin] + 2 ADP + 2 phosphate = protochlorophyllide a + reduced 2[4Fe-4S]-[ferredoxin] + 2 ATP + 2 H2O. It functions in the pathway porphyrin-containing compound metabolism; bacteriochlorophyll biosynthesis (light-independent). Component of the dark-operative protochlorophyllide reductase (DPOR) that uses Mg-ATP and reduced ferredoxin to reduce ring D of protochlorophyllide (Pchlide) to form chlorophyllide a (Chlide). This reaction is light-independent. The NB-protein (BchN-BchB) is the catalytic component of the complex. The protein is Light-independent protochlorophyllide reductase subunit N of Heliobacterium modesticaldum (strain ATCC 51547 / Ice1).